The primary structure comprises 328 residues: Probable transcription factor At4g00610 (328 aa).

Positions 31–143 are disordered; it reads AKNKTLVTPS…ERAKTETETG (113 aa). Over residues 35-54 the composition is skewed to polar residues; that stretch reads TLVTPSTVKKSSDVASTSKK. Residues 84–108 show a composition bias toward acidic residues; the sequence is SEEEEEDEPSSDSESGSESESDTEA. The span at 122–143 shows a compositional bias: basic and acidic residues; it reads NEKRQSEGKPEEERAKTETETG.

It belongs to the GeBP family.

This Arabidopsis thaliana (Mouse-ear cress) protein is Probable transcription factor At4g00610.